Reading from the N-terminus, the 70-residue chain is DNA-directed RNA polymerase subunit omega (70 aa).

It belongs to the RNA polymerase subunit omega family. The RNAP catalytic core consists of 2 alpha, 1 beta, 1 beta' and 1 omega subunit. When a sigma factor is associated with the core the holoenzyme is formed, which can initiate transcription.

It carries out the reaction RNA(n) + a ribonucleoside 5'-triphosphate = RNA(n+1) + diphosphate. Promotes RNA polymerase assembly. Latches the N- and C-terminal regions of the beta' subunit thereby facilitating its interaction with the beta and alpha subunits. In Nitratiruptor sp. (strain SB155-2), this protein is DNA-directed RNA polymerase subunit omega.